We begin with the raw amino-acid sequence, 225 residues long: PKHD-type hydroxylase Smlt1146 (225 aa).

In terms of domain architecture, Fe2OG dioxygenase spans 78-177; the sequence is KYLPPRFNRY…RVASFFWVQS (100 aa). Residues H96, D98, and H158 each coordinate Fe cation. R168 serves as a coordination point for 2-oxoglutarate.

Fe(2+) is required as a cofactor. L-ascorbate serves as cofactor.

This is PKHD-type hydroxylase Smlt1146 from Stenotrophomonas maltophilia (strain K279a).